The sequence spans 232 residues: Ribonuclease P protein component 3 (232 aa).

Belongs to the eukaryotic/archaeal RNase P protein component 3 family. In terms of assembly, consists of a catalytic RNA component and at least 5 protein subunits.

It localises to the cytoplasm. The enzyme catalyses Endonucleolytic cleavage of RNA, removing 5'-extranucleotides from tRNA precursor.. Functionally, part of ribonuclease P, a protein complex that generates mature tRNA molecules by cleaving their 5'-ends. The sequence is that of Ribonuclease P protein component 3 from Methanococcus maripaludis (strain DSM 14266 / JCM 13030 / NBRC 101832 / S2 / LL).